Here is a 174-residue protein sequence, read N- to C-terminus: Gamma-crystallin D (174 aa).

2 consecutive Beta/gamma crystallin 'Greek key' domains span residues G2–S40 and G41–P83. Residues H84–S87 form a connecting peptide region. Beta/gamma crystallin 'Greek key' domains lie at H88–E128 and G129–M171.

It belongs to the beta/gamma-crystallin family. Detected in the superior olivary complex of the auditory hindbrain.

Its function is as follows. Crystallins are the dominant structural components of the vertebrate eye lens. In Mus musculus (Mouse), this protein is Gamma-crystallin D (Crygd).